A 370-amino-acid polypeptide reads, in one-letter code: Aminomethyltransferase (370 aa).

Belongs to the GcvT family. As to quaternary structure, the glycine cleavage system is composed of four proteins: P, T, L and H.

It carries out the reaction N(6)-[(R)-S(8)-aminomethyldihydrolipoyl]-L-lysyl-[protein] + (6S)-5,6,7,8-tetrahydrofolate = N(6)-[(R)-dihydrolipoyl]-L-lysyl-[protein] + (6R)-5,10-methylene-5,6,7,8-tetrahydrofolate + NH4(+). The glycine cleavage system catalyzes the degradation of glycine. The polypeptide is Aminomethyltransferase (Clostridium botulinum (strain Kyoto / Type A2)).